A 201-amino-acid chain; its full sequence is NADH-quinone oxidoreductase subunit C (201 aa).

This sequence belongs to the complex I 30 kDa subunit family. As to quaternary structure, NDH-1 is composed of 14 different subunits. Subunits NuoB, C, D, E, F, and G constitute the peripheral sector of the complex.

The protein resides in the cell inner membrane. The enzyme catalyses a quinone + NADH + 5 H(+)(in) = a quinol + NAD(+) + 4 H(+)(out). NDH-1 shuttles electrons from NADH, via FMN and iron-sulfur (Fe-S) centers, to quinones in the respiratory chain. The immediate electron acceptor for the enzyme in this species is believed to be ubiquinone. Couples the redox reaction to proton translocation (for every two electrons transferred, four hydrogen ions are translocated across the cytoplasmic membrane), and thus conserves the redox energy in a proton gradient. This Azoarcus sp. (strain BH72) protein is NADH-quinone oxidoreductase subunit C.